The primary structure comprises 515 residues: Protein DETOXIFICATION 32 (515 aa).

Positions 1–26 (METLNVDHEDTISSEQEHRAHTKSDT) are enriched in basic and acidic residues. Residues 1 to 30 (METLNVDHEDTISSEQEHRAHTKSDTDMPP) are disordered. The next 12 helical transmembrane spans lie at 48 to 68 (LWWL…LGAV), 90 to 110 (VISG…ATLC), 131 to 151 (IILN…TPLL), 167 to 187 (FSLW…TAKF), 194 to 214 (VIAM…LSWL), 225 to 245 (GGAV…IVYI), 276 to 296 (AVMV…AGYL), 303 to 323 (VAAL…AFGF), 347 to 367 (LIVA…TLIV), 392 to 412 (LLAL…VAVG), 418 to 438 (IVAY…GLVL), and 448 to 468 (GIWT…LFII). Residues 488-497 (GDQSNKREEI) show a composition bias toward basic and acidic residues. Positions 488–515 (GDQSNKREEIDLCEEDENNSNGENNHRK) are disordered. Over residues 506 to 515 (NSNGENNHRK) the composition is skewed to low complexity.

This sequence belongs to the multi antimicrobial extrusion (MATE) (TC 2.A.66.1) family.

It localises to the membrane. The protein is Protein DETOXIFICATION 32 of Arabidopsis thaliana (Mouse-ear cress).